Consider the following 1661-residue polypeptide: Microtubule cross-linking factor 2 (1661 aa).

The disordered stretch occupies residues 1–187; it reads MEAPAAEPPV…EPSVAASSVG (187 aa). 2 stretches are compositionally biased toward low complexity: residues 76 to 94 and 133 to 149; these read AVAP…VRTG and LLGL…SAAG. Residues 167 to 176 show a composition bias toward pro residues; it reads QQPPRPPASP. The interval 211 to 240 is required for association with Golgi apparatus membrane; that stretch reads PSGLVRELEELRSENDYLKDEIEELRAEML. Coiled-coil stretches lie at residues 218-281 and 310-351; these read LEEL…AERR and SMRL…LQTE. The tract at residues 353 to 373 is disordered; it reads ERPREHSLKKRGTRSLGKADK. 3 coiled-coil regions span residues 450–484, 820–865, and 1083–1117; these read LKLV…MKDH, IKEL…LKED, and SQEK…LQKA. Residue serine 1169 is modified to Phosphoserine. The segment at 1196–1221 is disordered; it reads AFGFVSSEPGDPEKDTKEKPGLSSRD. A compositionally biased stretch (basic and acidic residues) spans 1206–1215; the sequence is DPEKDTKEKP. Residue serine 1255 is modified to Phosphoserine. 3 disordered regions span residues 1432-1456, 1538-1563, and 1636-1661; these read RPCC…DSSK, RAPS…ASYH, and HSPS…PPSE. The segment covering 1652–1661 has biased composition (basic and acidic residues); the sequence is GEERALPPSE.

The protein belongs to the MTCL family. Interacts with CLASP1 and CLASP2. The C-terminal 25 kDa form occurs as a monomer. Proteolytically cleaved in primary hepatocytes into a C-terminal 80 kDa form. Proteolytically cleaved into a C-terminal SOGA 25 kDa form that is detected in plasma. In terms of processing, phosphorylated during mitosis in a CDK1-dependent manner.

It is found in the cytoplasm. Its subcellular location is the cytoskeleton. The protein localises to the golgi apparatus membrane. It localises to the midbody. The protein resides in the secreted. In terms of biological role, microtubule-associated factor that enables integration of the centrosomal and Golgi-associated microtubules on the Golgi membrane, supporting directional migration. Preferentially acts on the perinuclear microtubules accumulated around the Golgi. Associates with the Golgi membrane through the N-terminal coiled-coil region and directly binds microtubules through the C-terminal domain. Required for faithful chromosome segregation during mitosis. Regulates autophagy by playing a role in the reduction of glucose production in an adiponectin- and insulin-dependent manner. In Homo sapiens (Human), this protein is Microtubule cross-linking factor 2.